Reading from the N-terminus, the 89-residue chain is Small ribosomal subunit protein uS15 (89 aa).

This sequence belongs to the universal ribosomal protein uS15 family. As to quaternary structure, part of the 30S ribosomal subunit. Forms a bridge to the 50S subunit in the 70S ribosome, contacting the 23S rRNA.

One of the primary rRNA binding proteins, it binds directly to 16S rRNA where it helps nucleate assembly of the platform of the 30S subunit by binding and bridging several RNA helices of the 16S rRNA. Its function is as follows. Forms an intersubunit bridge (bridge B4) with the 23S rRNA of the 50S subunit in the ribosome. The protein is Small ribosomal subunit protein uS15 of Nitrosospira multiformis (strain ATCC 25196 / NCIMB 11849 / C 71).